We begin with the raw amino-acid sequence, 727 residues long: MNRKILKLENLLRFHTICRQLHSLCQRRMLAQWRHMFSSAYAVHTAQLYTRPWQTDALLRAALSQRRLLVTKKEKRSQKSPLPSTKSKKEVEVWLGMTVEELARAMEKDIDCVYESLMNTAIDIDSLETHSRLDEVWIKEVIKKSGMKLKWSKLKQDKVRENKDAVKRPQADPALLIPRSPVVTIMGHVDHGKTTLLDKLRKTQVAAMEAGGITQHIGAFLVSLPSGEKITFLDTPGHAAFSAMRARGTQVTDIVILVVAADDGVMKQTVESIQHAKDAHVPIVLAINKCDKAEADPEKVKKELLAYDVVCEDYGGDVQAVHVSALTGENMMALAEATIALAEMLELKADPTGAVEGTVIESFTDKGRGPVTTAIIQRGTLRKGSILVAGKSWAKVRLMFDENGRAVNEAYPSMPVGIIGWRDLPSAGDEILEVESEPRAREVVDWRKYEQEQEKNKEDLKLIEEKRKEHQEAHRKDREKYGTVHWKERSYIKYREKRQQQPLKPKEKLERDSNVLPVIVKGDVDGSVEAILNVMDTYDASHECELDLVHFGVGDISENDVNLAETFHGVIYGFNVNAGNVIQQLAAKKGVKIKLHKIIYRLIEDLQEELSSRLPCIVEEHPIGEASILATFSITEGKKKVPVAGCRVQKGQIEKQKKFKLIRNGHVIWKGSLISLKHHKDDTSVVKTGMDCGLSLDEEKIEFKVGDAIICYEEKEVPAKTSWDPGF.

Residues 1-29 (MNRKILKLENLLRFHTICRQLHSLCQRRM) constitute a mitochondrion transit peptide. Positions 178–348 (PRSPVVTIMG…IALAEMLELK (171 aa)) constitute a tr-type G domain. Residues 187–194 (GHVDHGKT) are G1. 187–194 (GHVDHGKT) is a binding site for GTP. The G2 stretch occupies residues 212–216 (GITQH). GTP is bound by residues 234–237 (DTPG) and 288–291 (NKCD). The segment at 234–237 (DTPG) is G3. Residues 288-291 (NKCD) form a G4 region. Residues 324 to 326 (SAL) form a G5 region. Residue threonine 688 is modified to Phosphothreonine.

Belongs to the TRAFAC class translation factor GTPase superfamily. Classic translation factor GTPase family. IF-2 subfamily. As to quaternary structure, monomer.

The protein localises to the mitochondrion. One of the essential components for the initiation of protein synthesis. Protects formylmethionyl-tRNA from spontaneous hydrolysis and promotes its binding to the 30S ribosomal subunits. Also involved in the hydrolysis of GTP during the formation of the 70S ribosomal complex. This Bos taurus (Bovine) protein is Translation initiation factor IF-2, mitochondrial (MTIF2).